Here is a 444-residue protein sequence, read N- to C-terminus: Phosphomethylpyrimidine synthase (444 aa).

Residues N80, M109, Y138, H174, 194-196 (SRG), 235-238 (DSLR), and E274 contribute to the substrate site. Zn(2+) is bound at residue H278. Y301 is a substrate binding site. H342 is a binding site for Zn(2+). C422, C425, and C430 together coordinate [4Fe-4S] cluster.

The protein belongs to the ThiC family. In terms of assembly, homodimer. [4Fe-4S] cluster is required as a cofactor.

The catalysed reaction is 5-amino-1-(5-phospho-beta-D-ribosyl)imidazole + S-adenosyl-L-methionine = 4-amino-2-methyl-5-(phosphooxymethyl)pyrimidine + CO + 5'-deoxyadenosine + formate + L-methionine + 3 H(+). The protein operates within cofactor biosynthesis; thiamine diphosphate biosynthesis. Functionally, catalyzes the synthesis of the hydroxymethylpyrimidine phosphate (HMP-P) moiety of thiamine from aminoimidazole ribotide (AIR) in a radical S-adenosyl-L-methionine (SAM)-dependent reaction. In Nitratiruptor sp. (strain SB155-2), this protein is Phosphomethylpyrimidine synthase.